The sequence spans 164 residues: MKSVVTTVVTAADAAGRFLSQNDLEAVQGNIQRAAARLEAAEKLAAGLDKVTREAGDACFNKYSYLKQPGEAGDSQVKVDKCYRDLGHYLRLINYCLVVGGTGPLDEWGIAGAREVYRSLSLPTGPYVEALTYTRDRACAPRDMSPQALNEFKSYLDYVINALS.

Residues Cys-82 and Cys-139 each coordinate (2R,3E)-phycoerythrobilin.

This sequence belongs to the phycobiliprotein family. In terms of assembly, heterodimer of an alpha and a beta chain. Post-translationally, contains two covalently linked phycoerythrobilin chromophores.

It is found in the cellular thylakoid membrane. Functionally, light-harvesting photosynthetic bile pigment-protein from the phycobiliprotein complex. This is C-phycoerythrin class 1 subunit alpha (cpeA) from Synechococcus sp. (strain WH8020).